A 1000-amino-acid polypeptide reads, in one-letter code: Putative methyl-accepting chemotaxis protein sll0041 (1000 aa).

Residues 1–59 (MTQNPSSDRRPDTAQSVANGETLDGALFTGLTDTAAAQDESSETSASFATIDGEDKSEV) form a disordered region. GAF domains follow at residues 342–478 (EIQG…QTTL) and 509–650 (NSEQ…GLAL). Positions 671-722 (EKMQKRALELLMEVDPVSRGDLTIRAHVTEDEIGTIADSYNATIESLRRIVT) constitute an HAMP domain. One can recognise a Methyl-accepting transducer domain in the interval 727-963 (AASQFTETTD…SVTQTMALVA (237 aa)).

Belongs to the methyl-accepting chemotaxis (MCP) protein family.

In Synechocystis sp. (strain ATCC 27184 / PCC 6803 / Kazusa), this protein is Putative methyl-accepting chemotaxis protein sll0041.